Reading from the N-terminus, the 351-residue chain is Dihydroorotate dehydrogenase (quinone) (351 aa).

Residues 67-71 (AGFDK) and Thr91 each bind FMN. Position 71 (Lys71) interacts with substrate. Residue 116-120 (NAMGF) participates in substrate binding. Asn145 and Asn178 together coordinate FMN. Asn178 is a substrate binding site. Residue Ser181 is the Nucleophile of the active site. A substrate-binding site is contributed by Asn183. FMN is bound by residues Lys214 and Thr242. 243–244 (NT) is a binding site for substrate. FMN-binding positions include Gly262, Gly291, and 312–313 (YS).

The protein belongs to the dihydroorotate dehydrogenase family. Type 2 subfamily. In terms of assembly, monomer. It depends on FMN as a cofactor.

Its subcellular location is the cell membrane. It carries out the reaction (S)-dihydroorotate + a quinone = orotate + a quinol. It participates in pyrimidine metabolism; UMP biosynthesis via de novo pathway; orotate from (S)-dihydroorotate (quinone route): step 1/1. Catalyzes the conversion of dihydroorotate to orotate with quinone as electron acceptor. The sequence is that of Dihydroorotate dehydrogenase (quinone) (pyrD) from Helicobacter pylori (strain J99 / ATCC 700824) (Campylobacter pylori J99).